The following is a 401-amino-acid chain: Argininosuccinate synthase (401 aa).

ATP contacts are provided by residues 10–18 (AYSGGLDTS) and A37. Y89 contributes to the L-citrulline binding site. G119 provides a ligand contact to ATP. L-aspartate is bound by residues T121, N125, and D126. Position 125 (N125) interacts with L-citrulline. Residues R129, S178, S187, E263, and Y275 each contribute to the L-citrulline site.

Belongs to the argininosuccinate synthase family. Type 1 subfamily. Homotetramer.

It is found in the cytoplasm. The catalysed reaction is L-citrulline + L-aspartate + ATP = 2-(N(omega)-L-arginino)succinate + AMP + diphosphate + H(+). It functions in the pathway amino-acid biosynthesis; L-arginine biosynthesis; L-arginine from L-ornithine and carbamoyl phosphate: step 2/3. In Buchnera aphidicola subsp. Schizaphis graminum (strain Sg), this protein is Argininosuccinate synthase.